Here is a 215-residue protein sequence, read N- to C-terminus: Large ribosomal subunit protein uL1 (215 aa).

This sequence belongs to the universal ribosomal protein uL1 family. Part of the 50S ribosomal subunit.

Functionally, binds directly to 23S rRNA. Probably involved in E site tRNA release. Its function is as follows. Protein L1 is also a translational repressor protein, it controls the translation of its operon by binding to its mRNA. The chain is Large ribosomal subunit protein uL1 from Archaeoglobus fulgidus (strain ATCC 49558 / DSM 4304 / JCM 9628 / NBRC 100126 / VC-16).